The primary structure comprises 410 residues: Cysteine desulfurase IscS (410 aa).

Residues 80 to 81, N160, Q188, and 208 to 210 each bind pyridoxal 5'-phosphate; these read AT and SGH. Position 211 is an N6-(pyridoxal phosphate)lysine (K211). T248 provides a ligand contact to pyridoxal 5'-phosphate. C334 acts as the Cysteine persulfide intermediate in catalysis. C334 provides a ligand contact to [2Fe-2S] cluster.

Belongs to the class-V pyridoxal-phosphate-dependent aminotransferase family. NifS/IscS subfamily. In terms of assembly, homodimer. Forms a heterotetramer with IscU, interacts with other sulfur acceptors. Pyridoxal 5'-phosphate is required as a cofactor.

It localises to the cytoplasm. The catalysed reaction is (sulfur carrier)-H + L-cysteine = (sulfur carrier)-SH + L-alanine. The protein operates within cofactor biosynthesis; iron-sulfur cluster biosynthesis. In terms of biological role, master enzyme that delivers sulfur to a number of partners involved in Fe-S cluster assembly, tRNA modification or cofactor biosynthesis. Catalyzes the removal of elemental sulfur atoms from cysteine to produce alanine. Functions as a sulfur delivery protein for Fe-S cluster synthesis onto IscU, an Fe-S scaffold assembly protein, as well as other S acceptor proteins. This Rickettsia akari (strain Hartford) protein is Cysteine desulfurase IscS.